The sequence spans 2360 residues: DNA (cytosine-5-)-methyltransferase DMT5 (2360 aa).

The SAM-dependent MTase C5-type domain occupies F48–V507. The active site involves C146. Positions A1258–H1575 constitute a Helicase ATP-binding domain. H1271–T1278 provides a ligand contact to ATP. The interval S1451 to D1498 is disordered. Basic residues predominate over residues Q1465 to R1476. The segment at C2018–S2070 adopts an RING-type; degenerate zinc-finger fold. Residues K2102–K2267 enclose the Helicase C-terminal domain.

This sequence in the N-terminal section; belongs to the class I-like SAM-binding methyltransferase superfamily. C5-methyltransferase family. The protein in the C-terminal section; belongs to the SNF2/RAD54 helicase family.

The protein localises to the nucleus. Its subcellular location is the chromosome. It catalyses the reaction a 2'-deoxycytidine in DNA + S-adenosyl-L-methionine + ATP + H2O = a 5-methyl-2'-deoxycytidine in DNA + S-adenosyl-L-homocysteine + ADP + phosphate + 2 H(+). In terms of biological role, may play a role in cytosine methylation at palindromic 5'-CG-3' and 5'-C[ACT]G-3' sites in DNA. The chain is DNA (cytosine-5-)-methyltransferase DMT5 from Verticillium dahliae (strain VdLs.17 / ATCC MYA-4575 / FGSC 10137) (Verticillium wilt).